The primary structure comprises 240 residues: Orotidine 5'-phosphate decarboxylase (240 aa).

Residues D15, K37, 64–73, T127, R188, Q197, G217, and R218 contribute to the substrate site; that span reads DLKYHDIPNT. K66 (proton donor) is an active-site residue.

This sequence belongs to the OMP decarboxylase family. Type 1 subfamily. Homodimer.

The enzyme catalyses orotidine 5'-phosphate + H(+) = UMP + CO2. It functions in the pathway pyrimidine metabolism; UMP biosynthesis via de novo pathway; UMP from orotate: step 2/2. Catalyzes the decarboxylation of orotidine 5'-monophosphate (OMP) to uridine 5'-monophosphate (UMP). The chain is Orotidine 5'-phosphate decarboxylase from Geobacter sp. (strain M21).